A 1601-amino-acid polypeptide reads, in one-letter code: Ras guanine nucleotide exchange factor glfB (1601 aa).

Disordered stretches follow at residues 43-140 (PLLA…KEWD), 188-256 (DLLI…TTTT), 310-461 (SPQR…APDS), and 475-630 (LTTT…VKKG). A compositionally biased stretch (pro residues) spans 45–55 (LAPPAPPPPPT). Residues 57 to 69 (QEINIGSGNSTFI) show a composition bias toward polar residues. Low complexity predominate over residues 70-126 (SSNNNNSNNNNNNNSNNNNNNNLNNSNNNNNNLNSNNNNNNNNNNNNNNGNNNNNSN). At Ser-197 the chain carries Phosphoserine. Phosphothreonine is present on Thr-201. Composition is skewed to low complexity over residues 211–256 (QQQQ…TTTT) and 310–330 (SPQR…GVVV). A compositionally biased stretch (acidic residues) spans 331 to 359 (ADEESDSSEEESDSSEEESDEYTDEESET). The span at 384 to 398 (PLTSVNSNDNTSSGT) shows a compositional bias: polar residues. Low complexity-rich tracts occupy residues 435 to 458 (TAVA…TTVA), 475 to 493 (LTTT…TQSI), and 500 to 520 (SQQR…AITK). Positions 521–533 (PTKDAKDKKDPAK) are enriched in basic and acidic residues. A compositionally biased stretch (low complexity) spans 558 to 577 (VPTGTSPPVSSSTSISSSTG). Residues 578–596 (IKKDKVKLSKEEKDRIKKE) are compositionally biased toward basic and acidic residues. The 188-residue stretch at 649-836 (VRLTQLVLSN…LIIDNYVFLF (188 aa)) folds into the Rho-GAP domain. The region spanning 851–983 (GKMIISEGSI…TINDFLKLPK (133 aa)) is the N-terminal Ras-GEF domain. The 235-residue stretch at 1021–1255 (SAMEIAEQCT…ADLSLKCEPP (235 aa)) folds into the Ras-GEF domain. The interval 1262–1601 (YNAPADIVDE…QESVPSTNAE (340 aa)) is N-terminal F-actin-binding domain. The interval 1443–1474 (SNVEKEKLSSSQEQQEQQEQKQQEQQQQQQEP) is disordered. Over residues 1465–1474 (QEQQQQQQEP) the composition is skewed to low complexity.

As to quaternary structure, interacts with gpaB and rapA. Interacts directly with F-actin. Post-translationally, simultaneously phosphorylated at Ser-197 and Thr-201 after cAMP stimulation.

Its subcellular location is the cytoplasm. The protein resides in the cell cortex. It localises to the cytoskeleton. The protein localises to the cell projection. It is found in the filopodium. Its subcellular location is the lamellipodium. Functionally, gpaB-activated, rapA-specific guanine nucleotide exchange factor, involved in the regulation of the balance between Ras and Rap signaling at the leading edge of chemotaxing cells. Spatially localized activation of Rap and Ras induces F-actin polymerization at the leading edge of chemotaxing cells through the Rac, PI3K, and TORC2 pathways. Also acts as a key regulator of actin-driven membrane protrusions during processes such as phagocytosis and cytokinesis, possibly by modulating rapA signaling pathways. The protein is Ras guanine nucleotide exchange factor glfB of Dictyostelium discoideum (Social amoeba).